Reading from the N-terminus, the 183-residue chain is Threonylcarbamoyl-AMP synthase (183 aa).

The 183-residue stretch at 1-183 (MNFTEIAEKL…LLTDQLIREG (183 aa)) folds into the YrdC-like domain.

The protein belongs to the SUA5 family. TsaC subfamily.

It is found in the cytoplasm. It catalyses the reaction L-threonine + hydrogencarbonate + ATP = L-threonylcarbamoyladenylate + diphosphate + H2O. Required for the formation of a threonylcarbamoyl group on adenosine at position 37 (t(6)A37) in tRNAs that read codons beginning with adenine. Catalyzes the conversion of L-threonine, HCO(3)(-)/CO(2) and ATP to give threonylcarbamoyl-AMP (TC-AMP) as the acyladenylate intermediate, with the release of diphosphate. This is Threonylcarbamoyl-AMP synthase from Actinobacillus succinogenes (strain ATCC 55618 / DSM 22257 / CCUG 43843 / 130Z).